The primary structure comprises 810 residues: Transitional endoplasmic reticulum ATPase homolog 2 (810 aa).

Residues 252–258 (PGTGKTL), N353, H389, and 526–531 (GCGKTL) contribute to the ATP site. Basic and acidic residues predominate over residues 713-727 (RQEKERQDRSARGEE). Disordered stretches follow at residues 713–732 (RQEK…MEDE) and 777–810 (FGNN…DLYN). Gly residues predominate over residues 793–802 (PVGGNGGSGG). The interaction with ufd-2 stretch occupies residues 805–810 (DDDLYN).

Belongs to the AAA ATPase family. CDC48 subfamily. Homohexamer; oligomerization is ATP-independent. Forms a ring-shaped particle of 18.3 nm diameter, that displays 6-fold radial symmetry. Interacts with cdc-48.1 and thus may form heterohexamers. Forms a complex composed of ubxn-3, cdc-48.1 and/or cdc-48.2 and substrate cdt-1. Interacts (via N-terminus) with ubxn-3. Interacts (via N-terminus) with atx-3 (via RRDR motif). Interacts (via N-terminus) with ubxn-5. Interacts with ufd-1. Interacts (via DDDLYN motif) with ufd-2. Interacts (via N-terminus) with ubxn-1. Interacts (via N-terminus) with ubxn-2. Interacts (via N-terminus) with ubxn-4. Interacts with ubxn-6. As to expression, expressed in body wall muscles.

The protein resides in the cytoplasm. It carries out the reaction ATP + H2O = ADP + phosphate + H(+). With respect to regulation, the first ATP-binding region has low ATPase activity. The second ATP-binding region is responsible for ATPase activity. ATP binding to the first ATP-binding region induces intrinsic activity of the second ATP-binding region. While ATP binding to the first ATP-binding region appears to prevent ATP hydrolysis by the second ATP-binding region, ADP-binding to first region promotes the coordinate and cooperative ATPase cycle of the second ATP-binding region. ATP binding to the first ATP-binding region induces a conformational change, promoting the rotation of the first ATP-binding region relative to the second ATP-binding region in the hexamer. Inhibited by N-ethylmaleimide (NEM). In terms of biological role, ATP-dependent chaperone which probably uses the energy provided by ATP hydrolysis to generate mechanical force to unfold substrate proteins, disassemble protein complexes, and disaggregate protein aggregates. However, able to prevent aggregation of unfolded proteins also in an ATP-independent manner. Targets polyubiquitinated proteins for proteasomal degradation by binding to 'Lys-48'-linked polyubiquitin chains. Involved in the cytoplasmic elimination of misfolded proteins exported from the ER. This pathway, known as ERAD, prevents the activation of the unfolded protein response (UPR) caused by the accumulation of misfolded proteins in the ER. Together with udf-2 and chn-1, regulates myosin assembly in body wall muscles by targeting myosin chaperone unc-45 for proteasomal degradation. During oocyte meiosis and together with cdc-48.1, required for chromosome condensation at the diakinesis phase in prophase I and for progression of metaphase I. During the first embryonic cell division, regulates DNA replication and thus chromosome segregation and decondensation, and nuclear envelope re-assembly. In S phase and in association with ufd-1, npl-4.1 and/or npl-4.2 and ubxn-3, ensures the degradation of DNA licensing factor cdt-1 after the initiation of DNA replication and thus the disassembly of the DNA replication CMG helicase complex by promoting the dissociation from chromatin of several of its components including cdc-45 and sld-5. Regulates ubxn-3 nuclear localization during S phase. During the first embryonic cell divisions and together with cdc-48.1, regulates the re-assembly of the nuclear envelope after mitosis possibly by inactivating kinase air-2, a component of the chromosomal passenger complex (CPC). The protein is Transitional endoplasmic reticulum ATPase homolog 2 (cdc-48.2) of Caenorhabditis elegans.